The sequence spans 346 residues: Homeobox protein ceh-22 (346 aa).

Disordered regions lie at residues 1-68 (MFNV…QSAL) and 135-190 (LPDQ…RKKR). A compositionally biased stretch (low complexity) spans 9-24 (AATPSIASVSSVASPS). Polar residues predominate over residues 25–44 (EQHGLSTSVGVGVNDTTSRT). Over residues 49 to 67 (AASSASSASAAPQQQSQSA) the composition is skewed to low complexity. Residues 147–156 (LDNSNTSNGN) show a composition bias toward polar residues. Residues 166-182 (EDEDEILEDEENDEEDD) show a composition bias toward acidic residues. The homeobox DNA-binding region spans 189-248 (KRKRRVLFTKAQTYELERRFRSQKYLSAPEREALAMQIRLTPTQVKIWFQNHRYKTKKSH).

This sequence belongs to the NK-2 homeobox family.

The protein localises to the nucleus. Involved in combinatorial activation of gene expression in pharyngeal muscle. Specifically binds a site necessary for activity of the B subelement of myo-2 enhancer. Its function is as follows. Regulates distal tip cell fate. This is Homeobox protein ceh-22 (ceh-22) from Caenorhabditis elegans.